The chain runs to 1097 residues: Mitochondrial distribution and morphology protein 34 (1097 aa).

The region spanning 1 to 198 (MSFNFKWPTF…LPGIIHRLSQ (198 aa)) is the SMP-LTD domain. 8 disordered regions span residues 204–305 (EAKS…PLHS), 317–343 (AAFP…SGFS), 390–427 (QSDD…LDAV), 480–520 (DDQP…TSSL), 556–600 (PEVD…SSRT), 645–675 (LDAE…RDLS), 716–817 (GQNA…SPGV), and 923–1097 (GSSA…AIRE). The segment covering 205 to 229 (AKSEKDKVKQKAEAEEPPARSREPT) has biased composition (basic and acidic residues). A compositionally biased stretch (basic residues) spans 252 to 263 (RKSHSKAKKHSR). Positions 274–283 (SPCQSPQRPR) are enriched in low complexity. Basic residues predominate over residues 284–293 (QSPRRPRHVA). Residues 406-416 (SSSHDGKHDEG) show a composition bias toward basic and acidic residues. 2 stretches are compositionally biased toward low complexity: residues 508–519 (SSRSDRSACTSS) and 572–586 (GGTP…RFGS). Polar residues predominate over residues 662-675 (TNPTSRESSYRDLS). The span at 759–779 (GMSATPARTRASAAASARSRP) shows a compositional bias: low complexity. A compositionally biased stretch (polar residues) spans 784–796 (YATSPPGDSSGWQ). Residues 923–943 (GSSAASGTGTTSGSSQTGANA) are compositionally biased toward low complexity. A compositionally biased stretch (polar residues) spans 1004–1024 (SNKPNNTSTGQGEDSQDNSAA). Residues 1045–1059 (ASGSSASSAITDSSS) show a composition bias toward low complexity.

The protein belongs to the MDM34 family. As to quaternary structure, component of the ER-mitochondria encounter structure (ERMES) or MDM complex, composed of MMM1, MDM10, MDM12 and MDM34.

It is found in the mitochondrion outer membrane. Component of the ERMES/MDM complex, which serves as a molecular tether to connect the endoplasmic reticulum (ER) and mitochondria. Components of this complex are involved in the control of mitochondrial shape and protein biogenesis, and function in nonvesicular lipid trafficking between the ER and mitochondria. MDM34 is required for the interaction of the ER-resident membrane protein MMM1 and the outer mitochondrial membrane-resident beta-barrel protein MDM10. This Mycosarcoma maydis (Corn smut fungus) protein is Mitochondrial distribution and morphology protein 34.